The chain runs to 515 residues: MHTTESKNEHLEDENFQTSTTPQSLIDPNNTAQEETKTVLSDTEEIKPQTKKETYISCPLRGVLNVIITNGVILFVIWCMTWSILGSEALPGGNLFGLFIIFYSAIIGGKILQLIRIPLVPPLPPLLGMLLAGFTIRNVPFINEHVHVPNTWSSILRSIALTIILIRAGLGLDPQALRHLKVVCFRLAVGPCLMEASAAAVFSHFIMKFPWQWAFLLGFVLGAVSPAVVVPYMMVLQENGYGVEEGIPTLLMAASSMDDILAITGFNTCLSIVFSSGGILNNAIASIRNVCISLLAGIVLGFFVRYFPSEDQKKLTLKRGFLVLTMCVSAVLGSQRIGLHGSGGLCTLVLSFIAGTKWSQEKMKVQKIITTVWDIFQPLLFGLVGAEVSVSSLESNIVGISVATLSLALCVRILTTYLLMCFAGFSFKEKIFIALAWMPKATVQAVLGPLALETARVSAPHLEPYAKDVMTVAFLAILITAPNGALLMGILGPKMLTRHYDPSKIKLQLSTLEHH.

A compositionally biased stretch (basic and acidic residues) spans Met-1 to His-10. Positions Met-1–Ala-32 are disordered. The span at Phe-16 to Ala-32 shows a compositional bias: polar residues. The next 13 membrane-spanning stretches (helical) occupy residues Val-66 to Gly-86, Leu-95 to Ile-115, Arg-116 to Ile-136, Trp-152 to Leu-172, Leu-187 to Met-207, Phe-215 to Val-235, Ile-260 to Leu-280, Ile-284 to Val-304, Ile-337 to Lys-357, Ile-368 to Val-388, Leu-407 to Phe-427, Ile-431 to Ala-451, and Val-472 to Gly-492.

The protein belongs to the monovalent cation:proton antiporter 1 (CPA1) transporter (TC 2.A.36) family. As to expression, expressed only in the testis.

It localises to the cell projection. The protein localises to the cilium. Its subcellular location is the flagellum membrane. Sperm-specific Na(+)/H(+) exchanger involved in intracellular pH regulation of spermatozoa. Involved in sperm motility and fertility. This is Sodium/hydrogen exchanger 9B1 from Homo sapiens (Human).